The following is a 382-amino-acid chain: Intermediate transcription factor 3 large subunit (382 aa).

The protein belongs to the poxviruses A23 family. As to quaternary structure, heterodimer of a 45 kDa and a 32 kDa subunit.

In terms of biological role, acts with RNA polymerase to initiate transcription from intermediate gene promoters. The sequence is that of Intermediate transcription factor 3 large subunit (VITF3L) from Ectromelia virus (strain Moscow) (ECTV).